The sequence spans 85 residues: MPKLEMMLLVLLILPLCYIDAVGPPPPWNMEDEIIEHWQKLHCHEISDLTPWILCSPEPLCGGKGCCAQEVCDCSGTACTCPPCL.

A signal peptide spans 1 to 21 (MPKLEMMLLVLLILPLCYIDA). The propeptide occupies 22-40 (VGPPPPWNMEDEIIEHWQK).

Belongs to the conotoxin D superfamily. In terms of processing, contains 5 disulfide bonds. Expressed by the venom duct.

The protein resides in the secreted. Probable neurotoxin. The chain is Conotoxin Lt28.4 from Conus litteratus (Lettered cone).